Here is a 597-residue protein sequence, read N- to C-terminus: Aspartate--tRNA(Asp/Asn) ligase (597 aa).

Residue Glu175 coordinates L-aspartate. The tract at residues 199–202 is aspartate; that stretch reads QQYK. The L-aspartate site is built by Arg221 and His456. 221 to 223 contributes to the ATP binding site; the sequence is RDE. Position 490 (Glu490) interacts with ATP. Residue Arg497 coordinates L-aspartate. 542–545 contributes to the ATP binding site; it reads GVDR.

It belongs to the class-II aminoacyl-tRNA synthetase family. Type 1 subfamily. As to quaternary structure, homodimer.

The protein resides in the cytoplasm. The catalysed reaction is tRNA(Asx) + L-aspartate + ATP = L-aspartyl-tRNA(Asx) + AMP + diphosphate. In terms of biological role, aspartyl-tRNA synthetase with relaxed tRNA specificity since it is able to aspartylate not only its cognate tRNA(Asp) but also tRNA(Asn). Reaction proceeds in two steps: L-aspartate is first activated by ATP to form Asp-AMP and then transferred to the acceptor end of tRNA(Asp/Asn). In Beijerinckia indica subsp. indica (strain ATCC 9039 / DSM 1715 / NCIMB 8712), this protein is Aspartate--tRNA(Asp/Asn) ligase.